A 98-amino-acid polypeptide reads, in one-letter code: NADH-ubiquinone oxidoreductase chain 4L (98 aa).

3 helical membrane passes run 1–21 (MSLT…GLLM), 29–49 (SLLC…ITIL), and 61–81 (IILL…LVMV).

This sequence belongs to the complex I subunit 4L family. As to quaternary structure, core subunit of respiratory chain NADH dehydrogenase (Complex I) which is composed of 45 different subunits.

It is found in the mitochondrion inner membrane. It carries out the reaction a ubiquinone + NADH + 5 H(+)(in) = a ubiquinol + NAD(+) + 4 H(+)(out). In terms of biological role, core subunit of the mitochondrial membrane respiratory chain NADH dehydrogenase (Complex I) which catalyzes electron transfer from NADH through the respiratory chain, using ubiquinone as an electron acceptor. Part of the enzyme membrane arm which is embedded in the lipid bilayer and involved in proton translocation. This Mystacina tuberculata (New Zealand lesser short-tailed bat) protein is NADH-ubiquinone oxidoreductase chain 4L (MT-ND4L).